The sequence spans 347 residues: Tetraacyldisaccharide 4'-kinase (347 aa).

65-72 lines the ATP pocket; the sequence is FVGGTGKT.

This sequence belongs to the LpxK family.

The enzyme catalyses a lipid A disaccharide + ATP = a lipid IVA + ADP + H(+). Its pathway is glycolipid biosynthesis; lipid IV(A) biosynthesis; lipid IV(A) from (3R)-3-hydroxytetradecanoyl-[acyl-carrier-protein] and UDP-N-acetyl-alpha-D-glucosamine: step 6/6. Its function is as follows. Transfers the gamma-phosphate of ATP to the 4'-position of a tetraacyldisaccharide 1-phosphate intermediate (termed DS-1-P) to form tetraacyldisaccharide 1,4'-bis-phosphate (lipid IVA). This is Tetraacyldisaccharide 4'-kinase from Janthinobacterium sp. (strain Marseille) (Minibacterium massiliensis).